The primary structure comprises 393 residues: Acetate kinase (393 aa).

Asparagine 7 contributes to the Mg(2+) binding site. Lysine 14 provides a ligand contact to ATP. Substrate is bound at residue arginine 90. The active-site Proton donor/acceptor is aspartate 147. ATP-binding positions include 205–209, 280–282, and 328–332; these read HLGNG, DFR, and GIGEN. Glutamate 380 contributes to the Mg(2+) binding site.

This sequence belongs to the acetokinase family. Homodimer. Mg(2+) serves as cofactor. The cofactor is Mn(2+).

The protein localises to the cytoplasm. The enzyme catalyses acetate + ATP = acetyl phosphate + ADP. The protein operates within metabolic intermediate biosynthesis; acetyl-CoA biosynthesis; acetyl-CoA from acetate: step 1/2. Its function is as follows. Catalyzes the formation of acetyl phosphate from acetate and ATP. Can also catalyze the reverse reaction. The protein is Acetate kinase of Finegoldia magna (strain ATCC 29328 / DSM 20472 / WAL 2508) (Peptostreptococcus magnus).